The following is a 476-amino-acid chain: Glutamate--tRNA ligase (476 aa).

Positions 9–19 (PSPTGTLHIGT) match the 'HIGH' region motif. The 'KMSKS' region motif lies at 248-252 (KLSKR). Lys-251 contributes to the ATP binding site.

It belongs to the class-I aminoacyl-tRNA synthetase family. Glutamate--tRNA ligase type 1 subfamily. As to quaternary structure, monomer.

It localises to the cytoplasm. It carries out the reaction tRNA(Glu) + L-glutamate + ATP = L-glutamyl-tRNA(Glu) + AMP + diphosphate. Catalyzes the attachment of glutamate to tRNA(Glu) in a two-step reaction: glutamate is first activated by ATP to form Glu-AMP and then transferred to the acceptor end of tRNA(Glu). This Synechococcus sp. (strain CC9311) protein is Glutamate--tRNA ligase.